The primary structure comprises 611 residues: Leukotriene A-4 hydrolase (611 aa).

K73 is subject to N6-acetyllysine. Residues 135 to 137 and 267 to 272 contribute to the a peptide site; these read QCQ and PYGGME. H296 provides a ligand contact to Zn(2+). The active-site Proton acceptor is E297. Zn(2+) is bound by residues H300 and E319. N6-acetyllysine is present on K337. Y384 serves as the catalytic Proton donor. At K414 the chain carries N6-acetyllysine. The residue at position 416 (S416) is a Phosphoserine. A peptide is bound at residue 564 to 566; it reads RMK. Residue K573 is modified to N6-acetyllysine.

It belongs to the peptidase M1 family. Monomer. Zn(2+) is required as a cofactor. Post-translationally, phosphorylation at Ser-416 inhibits leukotriene-A4 hydrolase activity.

The protein localises to the cytoplasm. It carries out the reaction leukotriene A4 + H2O = leukotriene B4. The enzyme catalyses (5S,6S)-epoxy-(18R)-hydroxy-(7E,9E,11Z,14Z,16E)-eicosapentaenoate + H2O = resolvin E1. The catalysed reaction is (5S,6S)-epoxy-(18S)-hydroxy-(7E,9E,11Z,14Z,16E)-eicosapentaenoate + H2O = 18S-resolvin E1. It catalyses the reaction Release of the N-terminal residue from a tripeptide.. It participates in lipid metabolism; leukotriene B4 biosynthesis. Its activity is regulated as follows. Inhibited by bestatin. Inhibited by captopril. The epoxide hydrolase activity is restrained by suicide inactivation that involves binding of LTA4 to Tyr-379. 4-(4-benzylphenyl)thiazol-2-amine (ARM1) selectively inhibits the epoxide hydrolase activity. Functionally, bifunctional zinc metalloenzyme that comprises both epoxide hydrolase (EH) and aminopeptidase activities. Acts as an epoxide hydrolase to catalyze the conversion of LTA4 to the pro-inflammatory mediator leukotriene B4 (LTB4). Also has aminopeptidase activity, with high affinity for N-terminal arginines of various synthetic tripeptides. In addition to its pro-inflammatory EH activity, may also counteract inflammation by its aminopeptidase activity, which inactivates by cleavage another neutrophil attractant, the tripeptide Pro-Gly-Pro (PGP), a bioactive fragment of collagen generated by the action of matrix metalloproteinase-9 (MMP9) and prolylendopeptidase (PREPL). Involved also in the biosynthesis of resolvin E1 and 18S-resolvin E1 from eicosapentaenoic acid, two lipid mediators that show potent anti-inflammatory and pro-resolving actions. In Rattus norvegicus (Rat), this protein is Leukotriene A-4 hydrolase (Lta4h).